Here is a 165-residue protein sequence, read N- to C-terminus: 3-hydroxyacyl-[acyl-carrier-protein] dehydratase FabZ (165 aa).

Residue H68 is part of the active site.

It belongs to the thioester dehydratase family. FabZ subfamily.

It is found in the cytoplasm. It carries out the reaction a (3R)-hydroxyacyl-[ACP] = a (2E)-enoyl-[ACP] + H2O. In terms of biological role, involved in unsaturated fatty acids biosynthesis. Catalyzes the dehydration of short chain beta-hydroxyacyl-ACPs and long chain saturated and unsaturated beta-hydroxyacyl-ACPs. This chain is 3-hydroxyacyl-[acyl-carrier-protein] dehydratase FabZ, found in Methylobacterium sp. (strain 4-46).